The primary structure comprises 133 residues: ATP synthase epsilon chain, chloroplastic (133 aa).

This sequence belongs to the ATPase epsilon chain family. In terms of assembly, F-type ATPases have 2 components, CF(1) - the catalytic core - and CF(0) - the membrane proton channel. CF(1) has five subunits: alpha(3), beta(3), gamma(1), delta(1), epsilon(1). CF(0) has three main subunits: a, b and c.

The protein resides in the plastid. The protein localises to the chloroplast thylakoid membrane. Its function is as follows. Produces ATP from ADP in the presence of a proton gradient across the membrane. The polypeptide is ATP synthase epsilon chain, chloroplastic (Chara vulgaris (Common stonewort)).